A 370-amino-acid chain; its full sequence is NSFL1 cofactor p47 (370 aa).

Residues Ser-54–Thr-73 form a disordered region. Phosphoserine occurs at positions 74, 102, 114, and 140. 2 disordered regions span residues His-80–Asn-116 and Thr-138–Leu-157. Residues Pro-109–Pro-115 carry the Nuclear localization signal motif. At Tyr-167 the chain carries Phosphotyrosine. Positions Arg-172–His-175 match the Nuclear localization signal motif. Phosphoserine is present on residues Ser-176, Ser-192, and Ser-272. The SEP domain occupies Asp-179–Val-244. Positions Glu-291–Arg-368 constitute a UBX domain.

The protein belongs to the NSFL1C family. As to quaternary structure, part of a ternary complex containing STX5A, NSFL1C and VCP. NSFL1C forms a homotrimer that binds to one end of a VCP homohexamer. The complex binds to membranes enriched in phosphatidylethanolamine-containing lipids and promotes Golgi membrane fusion. Interaction with VCIP135 leads to dissociation of the complex via ATP hydrolysis by VCP. Binds ubiquitin and mono-ubiquitinated proteins via its N-terminal UBA-like domain when bound to VCP. Post-translationally, phosphorylated during mitosis. Phosphorylation inhibits interaction with Golgi membranes and is required for the fragmentation of the Golgi stacks during mitosis.

It is found in the nucleus. The protein resides in the golgi apparatus. It localises to the golgi stack. Its subcellular location is the chromosome. The protein localises to the cytoplasm. It is found in the cytoskeleton. The protein resides in the microtubule organizing center. It localises to the centrosome. In terms of biological role, reduces the ATPase activity of VCP. Necessary for the fragmentation of Golgi stacks during mitosis and for VCP-mediated reassembly of Golgi stacks after mitosis. May play a role in VCP-mediated formation of transitional endoplasmic reticulum (tER). Inhibits the activity of CTSL (in vitro). Together with UBXN2B/p37, regulates the centrosomal levels of kinase AURKA/Aurora A during mitotic progression by promoting AURKA removal from centrosomes in prophase. Also, regulates spindle orientation during mitosis. In Mus musculus (Mouse), this protein is NSFL1 cofactor p47 (Nsfl1c).